A 1647-amino-acid chain; its full sequence is MAP kinase-activating death domain protein (1647 aa).

In terms of domain architecture, uDENN spans 14–268 (YLVIVGARHP…VPVSGQKRVD (255 aa)). The span at 108–122 (EKGEGGAGSRGKEGT) shows a compositional bias: basic and acidic residues. The segment at 108–168 (EKGEGGAGSR…GKRRAKAGSR (61 aa)) is disordered. Residues 128-141 (SEEGGTESSESGSS) show a composition bias toward low complexity. A compositionally biased stretch (polar residues) spans 142–157 (LQPLSADSTPDVNQSP). Residue Ser-156 is modified to Phosphoserine. The segment covering 158–167 (RGKRRAKAGS) has biased composition (basic residues). In terms of domain architecture, cDENN spans 289 to 429 (RFTLVDFPLH…ESLELKKHLK (141 aa)). The dDENN domain occupies 431–565 (ALASMSLNTQ…LNPTNYAFQR (135 aa)). Disordered stretches follow at residues 604 to 636 (ALSV…SSYS) and 678 to 842 (NQKE…STEG). The span at 615-630 (SEPTDDSGSDSMDYDD) shows a compositional bias: acidic residues. A phosphoserine mark is found at Ser-689 and Ser-692. The span at 689 to 699 (SENSQENPPLR) shows a compositional bias: polar residues. Residues 700–712 (SSSSTTASSSPST) are compositionally biased toward low complexity. Over residues 750-768 (NVDRRQAEIGEGSVRRRIY) the composition is skewed to basic and acidic residues. The segment covering 790–804 (ESYTPRFSQHVSGNR) has biased composition (polar residues). Residues Ser-813, Ser-818, and Ser-820 each carry the phosphoserine modification. Low complexity predominate over residues 827–840 (RASSPNSTVSNTST). Ser-858, Ser-862, Ser-916, Ser-921, and Ser-930 each carry phosphoserine. 3 disordered regions span residues 913–941 (QKSS…SSEN), 1051–1110 (KEPD…DTRS), and 1146–1243 (VFDL…DSEI). Over residues 932 to 941 (QGRSSNSSEN) the composition is skewed to polar residues. Ser-1059 carries the phosphoserine modification. Phosphothreonine occurs at positions 1061 and 1066. Phosphoserine is present on Ser-1110. Composition is skewed to polar residues over residues 1158-1173 (QISA…SSQR), 1189-1207 (RSSS…SSGE), and 1234-1243 (SRGTLSDSEI). Position 1237 is a phosphothreonine (Thr-1237). Residues Ser-1239 and Ser-1270 each carry the phosphoserine modification. A Death domain is found at 1340–1415 (GMDQGPQEMI…GLVYSQQINE (76 aa)).

It belongs to the MADD family. Interacts (via death domain) with TNFRSF1A (via death domain). Interacts with PIDD1. Interacts with YWHAZ. Interacts (via death domain) with KIF1B; links the motor KIF1B to Rab3-carrying vesicles in anterograde synaptic vesicle transport. Interacts with KIF1A. Interacts (via uDENN domain) with RAB3A, RAB3B, RAB3C and RAB3D; the GTP-bound form of the Rab proteins is preferred for interaction. In terms of tissue distribution, expressed in testis, ovary, brain and heart. Expressed in spleen, thymus, prostate, testis, ovary, small instestine and colon. Expressed in liver. Not detected in the brain, breast, kidney, lung, ovary, pancreas, testis, uterus, stomach and thyroid. As to expression, expressed in the brain, breast, kidney, lung, ovary, pancreas, testis, uterus, stomach and thyroid.

It is found in the cell membrane. It localises to the cytoplasm. Its subcellular location is the cell projection. The protein localises to the axon. In terms of biological role, guanyl-nucleotide exchange factor that regulates small GTPases of the Rab family. Converts GDP-bound inactive form of RAB27A and RAB27B to the GTP-bound active forms. Converts GDP-bound inactive form of RAB3A, RAB3C and RAB3D to the GTP-bound active forms, GTPases involved in synaptic vesicle exocytosis and vesicle secretion. Plays a role in synaptic vesicle formation and in vesicle trafficking at the neuromuscular junction. Involved in up-regulating a post-docking step of synaptic exocytosis in central synapses. Probably by binding to the motor proteins KIF1B and KIF1A, mediates motor-dependent transport of GTP-RAB3A-positive vesicles to the presynaptic nerve terminals. Plays a role in TNFA-mediated activation of the MAPK pathway, including ERK1/2. May link TNFRSF1A with MAP kinase activation. May be involved in the regulation of TNFA-induced apoptosis. This Homo sapiens (Human) protein is MAP kinase-activating death domain protein.